The following is a 295-amino-acid chain: 4-hydroxy-tetrahydrodipicolinate synthase (295 aa).

Thr-47 provides a ligand contact to pyruvate. Tyr-135 (proton donor/acceptor) is an active-site residue. Lys-163 functions as the Schiff-base intermediate with substrate in the catalytic mechanism. Ile-206 lines the pyruvate pocket.

Belongs to the DapA family. In terms of assembly, homodimer.

It is found in the cytoplasm. It catalyses the reaction L-aspartate 4-semialdehyde + pyruvate = (2S,4S)-4-hydroxy-2,3,4,5-tetrahydrodipicolinate + H2O + H(+). Its pathway is amino-acid biosynthesis; L-lysine biosynthesis via DAP pathway; (S)-tetrahydrodipicolinate from L-aspartate: step 3/4. Catalyzes the condensation of (S)-aspartate-beta-semialdehyde [(S)-ASA] and pyruvate to 4-hydroxy-tetrahydrodipicolinate (HTPA). The protein is 4-hydroxy-tetrahydrodipicolinate synthase of Staphylococcus saprophyticus subsp. saprophyticus (strain ATCC 15305 / DSM 20229 / NCIMB 8711 / NCTC 7292 / S-41).